The following is a 252-amino-acid chain: Phosphate import ATP-binding protein PstB (252 aa).

One can recognise an ABC transporter domain in the interval 5–247 (MRGQDVKVFY…PKEQRTQDYI (243 aa)). 37–44 (GPSGCGKS) is a binding site for ATP.

This sequence belongs to the ABC transporter superfamily. Phosphate importer (TC 3.A.1.7) family. In terms of assembly, the complex is composed of two ATP-binding proteins (PstB), two transmembrane proteins (PstC and PstA) and a solute-binding protein (PstS).

It localises to the cell inner membrane. It catalyses the reaction phosphate(out) + ATP + H2O = ADP + 2 phosphate(in) + H(+). Part of the ABC transporter complex PstSACB involved in phosphate import. Responsible for energy coupling to the transport system. The sequence is that of Phosphate import ATP-binding protein PstB from Bartonella henselae (strain ATCC 49882 / DSM 28221 / CCUG 30454 / Houston 1) (Rochalimaea henselae).